Consider the following 193-residue polypeptide: Putative nitroreductase HBN1 (193 aa).

Position 2 is an N-acetylserine (Ser2).

The protein belongs to the nitroreductase family. It depends on FMN as a cofactor.

The protein resides in the cytoplasm. It is found in the nucleus. This Saccharomyces cerevisiae (strain ATCC 204508 / S288c) (Baker's yeast) protein is Putative nitroreductase HBN1 (HBN1).